The primary structure comprises 279 residues: Methylthioribulose-1-phosphate dehydratase (279 aa).

Position 132 (cysteine 132) interacts with substrate. Residues histidine 150 and histidine 152 each contribute to the Zn(2+) site. Catalysis depends on glutamate 175, which acts as the Proton donor/acceptor. A Zn(2+)-binding site is contributed by histidine 240.

It belongs to the aldolase class II family. MtnB subfamily. The cofactor is Zn(2+).

Its subcellular location is the cytoplasm. The enzyme catalyses 5-(methylsulfanyl)-D-ribulose 1-phosphate = 5-methylsulfanyl-2,3-dioxopentyl phosphate + H2O. The protein operates within amino-acid biosynthesis; L-methionine biosynthesis via salvage pathway; L-methionine from S-methyl-5-thio-alpha-D-ribose 1-phosphate: step 2/6. Catalyzes the dehydration of methylthioribulose-1-phosphate (MTRu-1-P) into 2,3-diketo-5-methylthiopentyl-1-phosphate (DK-MTP-1-P). The sequence is that of Methylthioribulose-1-phosphate dehydratase from Candida tropicalis (strain ATCC MYA-3404 / T1) (Yeast).